A 2623-amino-acid chain; its full sequence is Probable polyketide synthase 31 (2623 aa).

Over residues Met-1–Lys-11 the composition is skewed to low complexity. Residues Met-1–Asn-25 form a disordered region. The 435-residue stretch at Asp-27–Glu-461 folds into the Ketosynthase family 3 (KS3) domain. Active-site for beta-ketoacyl synthase activity residues include Cys-199, His-338, and His-384. The interval Gly-666 to Tyr-699 is acyl/malonyl transferase. The active-site For acyl/malonyl transferase activity is Ser-676. The interval His-959–Ser-1088 is N-terminal hotdog fold. Positions His-959–Pro-1267 constitute a PKS/mFAS DH domain. The Proton acceptor; for dehydratase activity role is filled by His-1000. A C-terminal hotdog fold region spans residues Asn-1105–Pro-1267. Asp-1177 functions as the Proton donor; for dehydratase activity in the catalytic mechanism. A Carrier domain is found at Ala-2524–Lys-2601. Ser-2561 carries the O-(pantetheine 4'-phosphoryl)serine modification. The interval Ala-2600–Asn-2623 is disordered. Over residues Lys-2601–Asn-2623 the composition is skewed to low complexity.

Pantetheine 4'-phosphate is required as a cofactor.

Its function is as follows. Probable polyketide synthase. The sequence is that of Probable polyketide synthase 31 (pks31) from Dictyostelium discoideum (Social amoeba).